Here is a 447-residue protein sequence, read N- to C-terminus: Phosphoglucosamine mutase (447 aa).

The active-site Phosphoserine intermediate is the Ser-100. Ser-100, Asp-240, Asp-242, and Asp-244 together coordinate Mg(2+). Ser-100 carries the phosphoserine modification.

Belongs to the phosphohexose mutase family. Requires Mg(2+) as cofactor. Post-translationally, activated by phosphorylation.

It carries out the reaction alpha-D-glucosamine 1-phosphate = D-glucosamine 6-phosphate. In terms of biological role, catalyzes the conversion of glucosamine-6-phosphate to glucosamine-1-phosphate. In Clostridium botulinum (strain Eklund 17B / Type B), this protein is Phosphoglucosamine mutase.